Consider the following 132-residue polypeptide: UPF0332 protein TM_1000 (132 aa).

This sequence belongs to the UPF0332 family.

The chain is UPF0332 protein TM_1000 from Thermotoga maritima (strain ATCC 43589 / DSM 3109 / JCM 10099 / NBRC 100826 / MSB8).